The chain runs to 869 residues: Speckle targeted PIP5K1A-regulated poly(A) polymerase (869 aa).

Residues 16-46 form a Matrin-type zinc finger; that stretch reads FRCCLCDVTTANRPSLDAHLKGRKHRDLVQL. Residues 56–128 enclose the RRM domain; it reads RSVFVSGFPR…HGLRVRPREQ (73 aa). A disordered region spans residues 114 to 144; it reads HSLGGHGLRVRPREQKEFQSPASKSPKGVDS. Residue Ser205 participates in ATP binding. Positions 216 and 218 each coordinate Mg(2+). The UTP site is built by Asp216 and Asp218. Disordered stretches follow at residues 226–247 and 259–335; these read MEET…LDSA and CTPA…ASKD. Polar residues-rich tracts occupy residues 266 to 276 and 283 to 299; these read DSLSPTSVQES and TPSS…LGSD. A compositionally biased stretch (basic and acidic residues) spans 314–335; it reads QEDRKEGKQGKELELAEEASKD. Asn395 contributes to the ATP binding site. The UTP site is built by Asn395, Arg417, Tyr435, and His552. One can recognise a PAP-associated domain in the interval 494-552; it reads LSSLLAQFFSCVSCLDLSGSLLSLREGRPLMVAEGLPSDLWEGLRLGPMNLQDPFDLSH. The KA1; binds the bulging loops of U6 snRNA but is dispensable for terminal uridylyltransferase activity stretch occupies residues 601–869; it reads SSPSSLLSAK…IPQALKNLLK (269 aa). Disordered stretches follow at residues 640-689, 735-757, 775-796, and 803-822; these read QGTK…DHSE, MKPE…HPSS, ARRR…TGAE, and RVTQ…PGEP. Positions 671 to 689 are enriched in basic and acidic residues; the sequence is KSFEEGKEEPQGCAGDHSE. Ser688 and Ser744 each carry phosphoserine.

It belongs to the DNA polymerase type-B-like family. Associates with the cleavage and polyadenylation specificity factor (CPSF) complex. Interacts with CPSF1 and CPSF3; the interaction is direct. Interacts with PIP5K1A. It depends on Mg(2+) as a cofactor. The cofactor is Mn(2+). Post-translationally, phosphorylated by CK1 in the proline-rich (Pro-rich) region.

The protein localises to the nucleus. The protein resides in the nucleolus. It localises to the nucleus speckle. It catalyses the reaction RNA(n) + UTP = RNA(n)-3'-uridine ribonucleotide + diphosphate. The enzyme catalyses RNA(n) + ATP = RNA(n)-3'-adenine ribonucleotide + diphosphate. Its activity is regulated as follows. Adenylyltransferase activity is specifically phosphatidylinositol 4,5-bisphosphate (PtdIns(4,5)P2). Functionally, poly(A) polymerase that creates the 3'-poly(A) tail of specific pre-mRNAs. Localizes to nuclear speckles together with PIP5K1A and mediates polyadenylation of a select set of mRNAs, such as HMOX1. In addition to polyadenylation, it is also required for the 3'-end cleavage of pre-mRNAs: binds to the 3'UTR of targeted pre-mRNAs and promotes the recruitment and assembly of the CPSF complex on the 3'UTR of pre-mRNAs. In addition to adenylyltransferase activity, also has uridylyltransferase activity. However, the ATP ratio is higher than UTP in cells, suggesting that it functions primarily as a poly(A) polymerase. Acts as a specific terminal uridylyltransferase for U6 snRNA in vitro: responsible for a controlled elongation reaction that results in the restoration of the four 3'-terminal UMP-residues found in newly transcribed U6 snRNA. Not involved in replication-dependent histone mRNA degradation. The chain is Speckle targeted PIP5K1A-regulated poly(A) polymerase (Tut1) from Mus musculus (Mouse).